Reading from the N-terminus, the 282-residue chain is Acetyl-coenzyme A carboxylase carboxyl transferase subunit beta (282 aa).

One can recognise a CoA carboxyltransferase N-terminal domain in the interval 29-282; sequence LPINCPSCSA…LSSLLGLHQG (254 aa). Residues cysteine 33, cysteine 36, cysteine 52, and cysteine 55 each contribute to the Zn(2+) site. The C4-type zinc-finger motif lies at 33-55; the sequence is CPSCSARIAAEALQRNLKVCPKC.

Belongs to the AccD/PCCB family. As to quaternary structure, acetyl-CoA carboxylase is a heterohexamer composed of biotin carboxyl carrier protein (AccB), biotin carboxylase (AccC) and two subunits each of ACCase subunit alpha (AccA) and ACCase subunit beta (AccD). It depends on Zn(2+) as a cofactor.

The protein localises to the cytoplasm. The enzyme catalyses N(6)-carboxybiotinyl-L-lysyl-[protein] + acetyl-CoA = N(6)-biotinyl-L-lysyl-[protein] + malonyl-CoA. It functions in the pathway lipid metabolism; malonyl-CoA biosynthesis; malonyl-CoA from acetyl-CoA: step 1/1. Functionally, component of the acetyl coenzyme A carboxylase (ACC) complex. Biotin carboxylase (BC) catalyzes the carboxylation of biotin on its carrier protein (BCCP) and then the CO(2) group is transferred by the transcarboxylase to acetyl-CoA to form malonyl-CoA. This chain is Acetyl-coenzyme A carboxylase carboxyl transferase subunit beta, found in Syntrophomonas wolfei subsp. wolfei (strain DSM 2245B / Goettingen).